A 968-amino-acid chain; its full sequence is Alanine--tRNA ligase, cytoplasmic (968 aa).

The residue at position 1 (methionine 1) is an N-acetylmethionine. ATP contacts are provided by residues arginine 77, histidine 95, tryptophan 176, and 214–216; that span reads IWN. L-alanine-binding residues include asparagine 216 and aspartate 239. Glycine 243 is an ATP binding site. 2 positions are modified to phosphoserine: serine 399 and serine 555. 4 residues coordinate Zn(2+): histidine 605, histidine 609, cysteine 723, and histidine 727. The short motif at 750–763 is the Nuclear localization signal element; that stretch reads RRIVAVTGAEAQKA. Lysine 876 is modified (N6-acetyllysine). Position 943 is an N6,N6,N6-trimethyllysine; alternate (lysine 943). Lysine 943 bears the N6,N6-dimethyllysine; alternate mark. Lysine 943 is modified (N6-methyllysine; alternate).

This sequence belongs to the class-II aminoacyl-tRNA synthetase family. In terms of assembly, monomer. Interacts with ANKRD16; the interaction is direct. The cofactor is Zn(2+). ISGylated. In terms of processing, methylation at 'Lys-943' by METTL21C.

It is found in the cytoplasm. The protein resides in the nucleus. The catalysed reaction is tRNA(Ala) + L-alanine + ATP = L-alanyl-tRNA(Ala) + AMP + diphosphate. It catalyses the reaction (S)-lactate + ATP + H(+) = (S)-lactoyl-AMP + diphosphate. The enzyme catalyses (S)-lactoyl-AMP + L-lysyl-[protein] = N(6)-[(S)-lactoyl]-L-lysyl-[protein] + AMP + 2 H(+). Its activity is regulated as follows. The protein lactyltransferase activity is inhibited by beta-alanine. Functionally, catalyzes the attachment of alanine to tRNA(Ala) in a two-step reaction: alanine is first activated by ATP to form Ala-AMP and then transferred to the acceptor end of tRNA(Ala). Also edits incorrectly charged tRNA(Ala) via its editing domain. In presence of high levels of lactate, also acts as a protein lactyltransferase that mediates lactylation of lysine residues in target proteins, such as TEAD1, TP53/p53 and YAP1. Protein lactylation takes place in a two-step reaction: lactate is first activated by ATP to form lactate-AMP and then transferred to lysine residues of target proteins. Acts as an inhibitor of TP53/p53 activity by catalyzing lactylation of TP53/p53. Acts as a positive regulator of the Hippo pathway by mediating lactylation of TEAD1 and YAP1. The chain is Alanine--tRNA ligase, cytoplasmic from Mus musculus (Mouse).